The sequence spans 347 residues: NADH-ubiquinone oxidoreductase chain 2 (347 aa).

Helical transmembrane passes span Pro3–Ser23, His25–Met45, Tyr59–Ile79, Thr96–Pro116, Val122–Leu142, Val149–Gly169, Ile178–Pro198, Ser201–Phe221, Ile239–Gly259, Asp274–Met294, and Met326–Leu346.

Belongs to the complex I subunit 2 family. In terms of assembly, core subunit of respiratory chain NADH dehydrogenase (Complex I) which is composed of 45 different subunits. Interacts with TMEM242.

Its subcellular location is the mitochondrion inner membrane. The catalysed reaction is a ubiquinone + NADH + 5 H(+)(in) = a ubiquinol + NAD(+) + 4 H(+)(out). Core subunit of the mitochondrial membrane respiratory chain NADH dehydrogenase (Complex I) which catalyzes electron transfer from NADH through the respiratory chain, using ubiquinone as an electron acceptor. Essential for the catalytic activity and assembly of complex I. This Sylvisorex johnstoni (Johnston's forest shrew) protein is NADH-ubiquinone oxidoreductase chain 2.